The primary structure comprises 188 residues: Elongation factor P (188 aa).

It belongs to the elongation factor P family.

The protein resides in the cytoplasm. It functions in the pathway protein biosynthesis; polypeptide chain elongation. In terms of biological role, involved in peptide bond synthesis. Stimulates efficient translation and peptide-bond synthesis on native or reconstituted 70S ribosomes in vitro. Probably functions indirectly by altering the affinity of the ribosome for aminoacyl-tRNA, thus increasing their reactivity as acceptors for peptidyl transferase. The protein is Elongation factor P of Methylobacterium sp. (strain 4-46).